We begin with the raw amino-acid sequence, 159 residues long: H/ACA ribonucleoprotein complex subunit 2-like protein (159 aa).

The segment at 1-28 is disordered; that stretch reads MAKTPKKDKTEEKEEHEESGGNKEDRER.

It belongs to the eukaryotic ribosomal protein eL8 family. In terms of assembly, component of the small nucleolar ribonucleoprotein particle containing H/ACA-type snoRNAs (H/ACA snoRNPs). Component of the telomerase holoenzyme complex.

It localises to the nucleus. The protein resides in the nucleolus. In terms of biological role, required for ribosome biogenesis. Part of a complex which catalyzes pseudouridylation of rRNA. This involves the isomerization of uridine such that the ribose is subsequently attached to C5, instead of the normal N1. Pseudouridine ('psi') residues may serve to stabilize the conformation of rRNAs. This chain is H/ACA ribonucleoprotein complex subunit 2-like protein, found in Branchiostoma belcheri (Amphioxus).